We begin with the raw amino-acid sequence, 81 residues long: Photosystem I iron-sulfur center (81 aa).

2 consecutive 4Fe-4S ferredoxin-type domains span residues 2-31 (SHAV…MVPW) and 39-68 (IAAS…IRVY). 8 residues coordinate [4Fe-4S] cluster: C11, C14, C17, C21, C48, C51, C54, and C58.

The cyanobacterial PSI reaction center is composed of one copy each of PsaA,B,C,D,E,F,I,J,K,L,M and X, and forms trimeric complexes. [4Fe-4S] cluster serves as cofactor.

It localises to the cellular thylakoid membrane. It catalyses the reaction reduced [plastocyanin] + hnu + oxidized [2Fe-2S]-[ferredoxin] = oxidized [plastocyanin] + reduced [2Fe-2S]-[ferredoxin]. In terms of biological role, apoprotein for the two 4Fe-4S centers FA and FB of photosystem I (PSI); essential for photochemical activity. FB is the terminal electron acceptor of PSI, donating electrons to ferredoxin. The C-terminus interacts with PsaA/B/D and helps assemble the protein into the PSI complex. Required for binding of PsaD and PsaE to PSI. PSI is a plastocyanin/cytochrome c6-ferredoxin oxidoreductase, converting photonic excitation into a charge separation, which transfers an electron from the donor P700 chlorophyll pair to the spectroscopically characterized acceptors A0, A1, FX, FA and FB in turn. The protein is Photosystem I iron-sulfur center of Prochlorococcus marinus (strain MIT 9303).